The primary structure comprises 300 residues: Cytochrome f (300 aa).

A signal peptide spans 1–32 (MMTYLSKQFSKLLFGQLLFLFIGNLLLKPVQA). The heme site is built by Tyr33, Cys53, Cys56, and His57. Residues 267–287 (LKTFIAFCVTVFIGQLAFVLK) traverse the membrane as a helical segment.

This sequence belongs to the cytochrome f family. As to quaternary structure, the 4 large subunits of the cytochrome b6-f complex are cytochrome b6, subunit IV (17 kDa polypeptide, petD), cytochrome f and the Rieske protein, while the 4 small subunits are PetG, PetL, PetM and PetN. The complex functions as a dimer. Heme is required as a cofactor.

It is found in the plastid. The protein localises to the chloroplast thylakoid membrane. Component of the cytochrome b6-f complex, which mediates electron transfer between photosystem II (PSII) and photosystem I (PSI), cyclic electron flow around PSI, and state transitions. The chain is Cytochrome f from Cyanidioschyzon merolae (strain NIES-3377 / 10D) (Unicellular red alga).